The chain runs to 494 residues: Ceramide glucosyltransferase (494 aa).

The Lumenal portion of the chain corresponds to 1–6 (MPLLMD). The helical transmembrane segment at 7-27 (GLAYAGAIWSLIVFCVQAIGL) threads the bilayer. Residues 28–337 (YQLFRSYSRP…VRWLRVRKWT (310 aa)) are Cytoplasmic-facing. Position 95 (Asp-95) is a short sequence motif, D1. A short sequence motif (D2) is located at residue Asp-160. Residue Asp-285 is a short sequence motif, D3. The active-site Proton acceptor is Asp-285. The (Q/R)XXRW motif lies at 326–330 (RRVRW). Residues 338 to 358 (VLLATLVEPGVESMVCCMAFA) traverse the membrane as a helical segment. The Lumenal portion of the chain corresponds to 359–380 (HALTTTPWCPNPADWPIPHTWT). The chain crosses the membrane as a helical span at residues 381–401 (ALWSIWLAAIAVWATLDYVVY). The Cytoplasmic portion of the chain corresponds to 402–428 (HFLHSCRSIEKDADSPDFAQGNELMKR). Residues 429-449 (PFGAWILAWIGREILALPIWT) traverse the membrane as a helical segment. Residues 450 to 494 (RAVLLGTTVTWRGTKFKVRPDQSVVDIPNAGAKSNGIGSTNRKVR) are Lumenal-facing.

This sequence belongs to the glycosyltransferase 2 family.

It localises to the golgi apparatus membrane. The enzyme catalyses an N-acylsphing-4-enine + UDP-alpha-D-glucose = a beta-D-glucosyl-(1&lt;-&gt;1')-N-acylsphing-4-enine + UDP + H(+). It participates in lipid metabolism; sphingolipid metabolism. In terms of biological role, catalyzes the final step in the biosynthesis of the membrane lipid glucosylceramide (GluCer), the transfer of glucose to ceramide. Glucosylceramides play important roles in growth, differentiation and pathogenicity. The sequence is that of Ceramide glucosyltransferase from Pyricularia oryzae (strain 70-15 / ATCC MYA-4617 / FGSC 8958) (Rice blast fungus).